Consider the following 146-residue polypeptide: Putative pre-16S rRNA nuclease (146 aa).

It belongs to the YqgF nuclease family.

It localises to the cytoplasm. Its function is as follows. Could be a nuclease involved in processing of the 5'-end of pre-16S rRNA. The chain is Putative pre-16S rRNA nuclease from Burkholderia thailandensis (strain ATCC 700388 / DSM 13276 / CCUG 48851 / CIP 106301 / E264).